Here is a 454-residue protein sequence, read N- to C-terminus: tRNA modification GTPase MnmE (454 aa).

Residues arginine 23, glutamate 80, and lysine 120 each contribute to the (6S)-5-formyl-5,6,7,8-tetrahydrofolate site. Residues glycine 216 to glycine 377 enclose the TrmE-type G domain. Position 226 (asparagine 226) interacts with K(+). Residues asparagine 226–serine 231, threonine 245–threonine 251, aspartate 270–glycine 273, asparagine 335–aspartate 338, and serine 358–arginine 360 contribute to the GTP site. Serine 230 contributes to the Mg(2+) binding site. Positions 245, 247, and 250 each coordinate K(+). Threonine 251 is a Mg(2+) binding site. Position 454 (lysine 454) interacts with (6S)-5-formyl-5,6,7,8-tetrahydrofolate.

It belongs to the TRAFAC class TrmE-Era-EngA-EngB-Septin-like GTPase superfamily. TrmE GTPase family. Homodimer. Heterotetramer of two MnmE and two MnmG subunits. It depends on K(+) as a cofactor.

It localises to the cytoplasm. Exhibits a very high intrinsic GTPase hydrolysis rate. Involved in the addition of a carboxymethylaminomethyl (cmnm) group at the wobble position (U34) of certain tRNAs, forming tRNA-cmnm(5)s(2)U34. The chain is tRNA modification GTPase MnmE from Yersinia pseudotuberculosis serotype O:3 (strain YPIII).